Reading from the N-terminus, the 288-residue chain is Phosphatidylserine decarboxylase proenzyme (288 aa).

Catalysis depends on charge relay system; for autoendoproteolytic cleavage activity residues aspartate 90, histidine 147, and serine 252. The active-site Schiff-base intermediate with substrate; via pyruvic acid; for decarboxylase activity is the serine 252. Residue serine 252 is modified to Pyruvic acid (Ser); by autocatalysis.

Belongs to the phosphatidylserine decarboxylase family. PSD-B subfamily. Prokaryotic type I sub-subfamily. Heterodimer of a large membrane-associated beta subunit and a small pyruvoyl-containing alpha subunit. Pyruvate is required as a cofactor. In terms of processing, is synthesized initially as an inactive proenzyme. Formation of the active enzyme involves a self-maturation process in which the active site pyruvoyl group is generated from an internal serine residue via an autocatalytic post-translational modification. Two non-identical subunits are generated from the proenzyme in this reaction, and the pyruvate is formed at the N-terminus of the alpha chain, which is derived from the carboxyl end of the proenzyme. The autoendoproteolytic cleavage occurs by a canonical serine protease mechanism, in which the side chain hydroxyl group of the serine supplies its oxygen atom to form the C-terminus of the beta chain, while the remainder of the serine residue undergoes an oxidative deamination to produce ammonia and the pyruvoyl prosthetic group on the alpha chain. During this reaction, the Ser that is part of the protease active site of the proenzyme becomes the pyruvoyl prosthetic group, which constitutes an essential element of the active site of the mature decarboxylase.

The protein localises to the cell membrane. The catalysed reaction is a 1,2-diacyl-sn-glycero-3-phospho-L-serine + H(+) = a 1,2-diacyl-sn-glycero-3-phosphoethanolamine + CO2. It participates in phospholipid metabolism; phosphatidylethanolamine biosynthesis; phosphatidylethanolamine from CDP-diacylglycerol: step 2/2. Catalyzes the formation of phosphatidylethanolamine (PtdEtn) from phosphatidylserine (PtdSer). The chain is Phosphatidylserine decarboxylase proenzyme from Pseudomonas fluorescens (strain ATCC BAA-477 / NRRL B-23932 / Pf-5).